We begin with the raw amino-acid sequence, 357 residues long: Peptide chain release factor 1 (357 aa).

Position 232 is an N5-methylglutamine (Gln-232). Basic and acidic residues predominate over residues 281-305 (DRQHNEMAADRRSQVGSGDRSERIR). The interval 281–309 (DRQHNEMAADRRSQVGSGDRSERIRTYNF) is disordered.

This sequence belongs to the prokaryotic/mitochondrial release factor family. Post-translationally, methylated by PrmC. Methylation increases the termination efficiency of RF1.

The protein localises to the cytoplasm. Its function is as follows. Peptide chain release factor 1 directs the termination of translation in response to the peptide chain termination codons UAG and UAA. This is Peptide chain release factor 1 from Nitratidesulfovibrio vulgaris (strain DSM 19637 / Miyazaki F) (Desulfovibrio vulgaris).